A 268-amino-acid polypeptide reads, in one-letter code: Pantothenate synthetase (268 aa).

An ATP-binding site is contributed by 18–25 (MGYLHEGH). H25 (proton donor) is an active-site residue. Residue Q49 participates in (R)-pantoate binding. Q49 is a beta-alanine binding site. ATP is bound at residue 135-138 (GQKD). Position 141 (Q141) interacts with (R)-pantoate. ATP is bound by residues I164 and 172-175 (LSSR).

This sequence belongs to the pantothenate synthetase family. As to quaternary structure, homodimer.

It is found in the cytoplasm. The catalysed reaction is (R)-pantoate + beta-alanine + ATP = (R)-pantothenate + AMP + diphosphate + H(+). The protein operates within cofactor biosynthesis; (R)-pantothenate biosynthesis; (R)-pantothenate from (R)-pantoate and beta-alanine: step 1/1. Functionally, catalyzes the condensation of pantoate with beta-alanine in an ATP-dependent reaction via a pantoyl-adenylate intermediate. This chain is Pantothenate synthetase, found in Dehalococcoides mccartyi (strain CBDB1).